The following is an 81-amino-acid chain: Translational regulator CsrA (81 aa).

The protein belongs to the CsrA/RsmA family. As to quaternary structure, homodimer; the beta-strands of each monomer intercalate to form a hydrophobic core, while the alpha-helices form wings that extend away from the core.

The protein resides in the cytoplasm. A translational regulator that binds mRNA to regulate translation initiation and/or mRNA stability. Usually binds in the 5'-UTR at or near the Shine-Dalgarno sequence preventing ribosome-binding, thus repressing translation. Its main target seems to be the major flagellin gene, while its function is anatagonized by FliW. This is Translational regulator CsrA from Borreliella burgdorferi (strain ATCC 35210 / DSM 4680 / CIP 102532 / B31) (Borrelia burgdorferi).